The sequence spans 242 residues: Glucosamine-6-phosphate deaminase (242 aa).

Catalysis depends on Asp-67, which acts as the Proton acceptor; for enolization step. Asn-137 functions as the For ring-opening step in the catalytic mechanism. The active-site Proton acceptor; for ring-opening step is His-139. Glu-144 acts as the For ring-opening step in catalysis.

It belongs to the glucosamine/galactosamine-6-phosphate isomerase family. NagB subfamily.

It carries out the reaction alpha-D-glucosamine 6-phosphate + H2O = beta-D-fructose 6-phosphate + NH4(+). It functions in the pathway amino-sugar metabolism; N-acetylneuraminate degradation; D-fructose 6-phosphate from N-acetylneuraminate: step 5/5. Functionally, catalyzes the reversible isomerization-deamination of glucosamine 6-phosphate (GlcN6P) to form fructose 6-phosphate (Fru6P) and ammonium ion. The protein is Glucosamine-6-phosphate deaminase of Staphylococcus saprophyticus subsp. saprophyticus (strain ATCC 15305 / DSM 20229 / NCIMB 8711 / NCTC 7292 / S-41).